Reading from the N-terminus, the 258-residue chain is uncharacterized protein (258 aa).

The first 20 residues, 1 to 20 (MKCFQKLYIFILILIVLMAG), serve as a signal peptide directing secretion. Residue C21 is the site of N-palmitoyl cysteine attachment. The S-diacylglycerol cysteine moiety is linked to residue C21.

This sequence belongs to the staphylococcal tandem lipoprotein family.

It is found in the cell membrane. This is an uncharacterized protein from Staphylococcus aureus (strain bovine RF122 / ET3-1).